The sequence spans 554 residues: Arginine--tRNA ligase (554 aa).

The 'HIGH' region signature appears at 129–139 (ANPTGPLHIGH).

This sequence belongs to the class-I aminoacyl-tRNA synthetase family. In terms of assembly, monomer.

The protein resides in the cytoplasm. The enzyme catalyses tRNA(Arg) + L-arginine + ATP = L-arginyl-tRNA(Arg) + AMP + diphosphate. The protein is Arginine--tRNA ligase of Syntrophotalea carbinolica (strain DSM 2380 / NBRC 103641 / GraBd1) (Pelobacter carbinolicus).